The sequence spans 357 residues: Ferrochelatase (357 aa).

Residues H193 and E272 each contribute to the Fe cation site.

Belongs to the ferrochelatase family.

The protein resides in the cytoplasm. The catalysed reaction is heme b + 2 H(+) = protoporphyrin IX + Fe(2+). The protein operates within porphyrin-containing compound metabolism; protoheme biosynthesis; protoheme from protoporphyrin-IX: step 1/1. In terms of biological role, catalyzes the ferrous insertion into protoporphyrin IX. This is Ferrochelatase from Hyphomonas neptunium (strain ATCC 15444).